A 252-amino-acid polypeptide reads, in one-letter code: MAGHSKFKNIQHRKCAQDKKRAKVFTKLIREIVTAVKTGSSNIPENNPRLRNALTAARSQNLPKERIDKAINSADDANTENYTEIRYEGYAPNGIAIIVEALTDNKNRTAAEVRSSFTKYGGSLGETGSVNYLFKHCGVIQYPTNIASNEDIFEAAIEAGGDDIVSDAIFHTICTDIENFSKVLEFLTGKYGIPEDSYIGWIPLNTIIIDDTEKAEKLLKLVEALEESDDVQRVFSNYEFSDDVYEIIQGEE.

This sequence belongs to the TACO1 family.

The protein resides in the cytoplasm. The sequence is that of Probable transcriptional regulatory protein A1C_04175 from Rickettsia akari (strain Hartford).